The sequence spans 608 residues: 1-deoxy-D-xylulose-5-phosphate synthase (608 aa).

Residues histidine 66 and 107–109 (GHA) contribute to the thiamine diphosphate site. Aspartate 138 serves as a coordination point for Mg(2+). Thiamine diphosphate-binding positions include 139-140 (GA), asparagine 167, phenylalanine 277, and glutamate 350. Residue asparagine 167 participates in Mg(2+) binding.

Belongs to the transketolase family. DXPS subfamily. As to quaternary structure, homodimer. The cofactor is Mg(2+). Thiamine diphosphate serves as cofactor.

The enzyme catalyses D-glyceraldehyde 3-phosphate + pyruvate + H(+) = 1-deoxy-D-xylulose 5-phosphate + CO2. Its pathway is metabolic intermediate biosynthesis; 1-deoxy-D-xylulose 5-phosphate biosynthesis; 1-deoxy-D-xylulose 5-phosphate from D-glyceraldehyde 3-phosphate and pyruvate: step 1/1. In terms of biological role, catalyzes the acyloin condensation reaction between C atoms 2 and 3 of pyruvate and glyceraldehyde 3-phosphate to yield 1-deoxy-D-xylulose-5-phosphate (DXP). The sequence is that of 1-deoxy-D-xylulose-5-phosphate synthase from Thermotoga sp. (strain RQ2).